We begin with the raw amino-acid sequence, 91 residues long: Pre-early 3 receptor internalization and degradation alpha protein (91 aa).

Residues 1-4 lie on the Cytoplasmic side of the membrane; the sequence is MIPR. A propeptide spans 1-22 (signal peptide); sequence MIPRVLILLTLVALFCACSTLA. A helical membrane pass occupies residues 5–25; that stretch reads VLILLTLVALFCACSTLAAVA. Residues 26–34 are Lumenal-facing; that stretch reads HIEVDCIPP. A helical transmembrane segment spans residues 35-60; that stretch reads FTVYLLYGFVTLILICSLVTVVIAFI. Residues 61-91 lie on the Cytoplasmic side of the membrane; the sequence is QFIDWVCVRIAYLRHHPQYRDRTIADLLRIL.

It belongs to the adenoviridae E3-RID-alpha family. Homodimer with only one chain cleaved by signal peptidase. Interacts with E3 RID-beta and E3 CR1-alpha. Post-translationally, the signal peptide is only cleaved partially by host signal peptidase. This results in two forms of the protein, one uncleaved with two transmembrane regions, and one cleaved with one transmembrane region.

It is found in the host membrane. Its subcellular location is the host endoplasmic reticulum. Functionally, prevents infected cell apoptosis induced by the host immune system. Acts by down-regulating a number of cell surface receptors in the tumor necrosis factor (TNF) receptor superfamily, namely FAS, TNFRSF10A/TRAIL receptor 1, and TNFRSF10B/TRAIL receptor 2. Down-regulation of these death receptors protects adenovirus-infected cells from apoptosis induced by the death receptor ligands Fas ligand and TRAIL. RID complex also down-regulates certain tyrosine kinase cell surface receptors, especially the epidermal growth factor receptor (EGFR). RID-mediated Fas and EGFR down-regulation occurs via endocytosis of the receptors into endosomes followed by transport to and degradation within lysosomes. This is Pre-early 3 receptor internalization and degradation alpha protein from Homo sapiens (Human).